We begin with the raw amino-acid sequence, 284 residues long: D-tagatose-1,6-bisphosphate aldolase subunit GatY (284 aa).

Catalysis depends on aspartate 82, which acts as the Proton donor. Positions 83 and 180 each coordinate Zn(2+). Glycine 181 contributes to the dihydroxyacetone phosphate binding site. Histidine 208 serves as a coordination point for Zn(2+). Residues 209-211 and 230-233 contribute to the dihydroxyacetone phosphate site; these read GAS and NVAT.

The protein belongs to the class II fructose-bisphosphate aldolase family. TagBP aldolase GatY subfamily. As to quaternary structure, forms a complex with GatZ. It depends on Zn(2+) as a cofactor.

It carries out the reaction D-tagatofuranose 1,6-bisphosphate = D-glyceraldehyde 3-phosphate + dihydroxyacetone phosphate. It functions in the pathway carbohydrate metabolism; D-tagatose 6-phosphate degradation; D-glyceraldehyde 3-phosphate and glycerone phosphate from D-tagatose 6-phosphate: step 2/2. Functionally, catalytic subunit of the tagatose-1,6-bisphosphate aldolase GatYZ, which catalyzes the reversible aldol condensation of dihydroxyacetone phosphate (DHAP or glycerone-phosphate) with glyceraldehyde 3-phosphate (G3P) to produce tagatose 1,6-bisphosphate (TBP). Requires GatZ subunit for full activity and stability. Is involved in the catabolism of galactitol. In Escherichia coli O45:K1 (strain S88 / ExPEC), this protein is D-tagatose-1,6-bisphosphate aldolase subunit GatY.